We begin with the raw amino-acid sequence, 156 residues long: Small ribosomal subunit protein eS19A (156 aa).

This sequence belongs to the eukaryotic ribosomal protein eS19 family.

In Drosophila melanogaster (Fruit fly), this protein is Small ribosomal subunit protein eS19A (RpS19a).